Reading from the N-terminus, the 466-residue chain is 3-isopropylmalate dehydratase large subunit (466 aa).

[4Fe-4S] cluster-binding residues include cysteine 347, cysteine 407, and cysteine 410.

It belongs to the aconitase/IPM isomerase family. LeuC type 1 subfamily. Heterodimer of LeuC and LeuD. [4Fe-4S] cluster is required as a cofactor.

It carries out the reaction (2R,3S)-3-isopropylmalate = (2S)-2-isopropylmalate. Its pathway is amino-acid biosynthesis; L-leucine biosynthesis; L-leucine from 3-methyl-2-oxobutanoate: step 2/4. Its function is as follows. Catalyzes the isomerization between 2-isopropylmalate and 3-isopropylmalate, via the formation of 2-isopropylmaleate. The chain is 3-isopropylmalate dehydratase large subunit from Shigella flexneri serotype 5b (strain 8401).